The primary structure comprises 70 residues: uncharacterized protein (70 aa).

This is an uncharacterized protein from Rickettsia conorii (strain ATCC VR-613 / Malish 7).